A 113-amino-acid polypeptide reads, in one-letter code: Death-associated protein-like 1.L (113 aa).

The interval 1-57 (MAKEQKMQSSPQALKAGHLPAVKAGGMRVSKKQGNEENSAPEKNAKKTLQEKPSSVL) is disordered.

It belongs to the DAP-DAPL1 family. Associates with ribosomes; preventing translation. Interacts with eiF5a (eif5a and eif5a2); preventing translation.

In terms of biological role, ribosome-binding protein that promotes ribosome hibernation, a process during which ribosomes are stabilized in an inactive state and preserved from proteasomal degradation. Acts via its association with eiF5a (eif5a and eif5a2) at the polypeptide exit tunnel of the ribosome, preventing mRNA translation. Plays a key role in ribosome hibernation in the mature egg by preventing mRNA translation, leading to ribosome inactivation. Ribosomes, which are produced in large quantities during oogenesis, are stored and translationally repressed in the egg and early embryo. The protein is Death-associated protein-like 1.L (dapl1.L) of Xenopus laevis (African clawed frog).